The following is a 625-amino-acid chain: Arginine--tRNA ligase (625 aa).

The 'HIGH' region signature appears at 117–127; that stretch reads ANPIHPLHIGH.

The protein belongs to the class-I aminoacyl-tRNA synthetase family.

Its subcellular location is the cytoplasm. It catalyses the reaction tRNA(Arg) + L-arginine + ATP = L-arginyl-tRNA(Arg) + AMP + diphosphate. The chain is Arginine--tRNA ligase from Saccharolobus solfataricus (strain ATCC 35092 / DSM 1617 / JCM 11322 / P2) (Sulfolobus solfataricus).